The sequence spans 176 residues: Protein singles bar (176 aa).

A run of 4 helical transmembrane segments spans residues 13–35 (LGIR…LSRI), 71–91 (FLAT…CYAF), 111–131 (LASC…VVWL), and 140–160 (GFWA…AGIL). The MARVEL domain maps to 30 to 173 (FVLSRIGLLK…DAYLAFRHFR (144 aa)).

It localises to the membrane. Its function is as follows. Essential for myoblast fusion in developing embryos and pupae, and consequently is essential for muscle formation in adults. Required for progression past the pre-fusion complex stage of myoblast fusion. This chain is Protein singles bar, found in Drosophila melanogaster (Fruit fly).